The sequence spans 209 residues: Large ribosomal subunit protein uL3 (209 aa).

The segment at 126 to 165 (HNFGGGSRTHGQSDRLRAPGSVGGSSDPSRTFRGTRMAGR) is disordered.

It belongs to the universal ribosomal protein uL3 family. In terms of assembly, part of the 50S ribosomal subunit. Forms a cluster with proteins L14 and L19.

Functionally, one of the primary rRNA binding proteins, it binds directly near the 3'-end of the 23S rRNA, where it nucleates assembly of the 50S subunit. This is Large ribosomal subunit protein uL3 from Chlorobium limicola (strain DSM 245 / NBRC 103803 / 6330).